The primary structure comprises 521 residues: Ribonuclease Y (521 aa).

A helical membrane pass occupies residues 1 to 21 (MFFIEHPFVYLGLDLIVGCLI). Positions 211-271 (TVSMVPLPSD…VRREVARLAL (61 aa)) constitute a KH domain. Residues 337–430 (VLQHSLEVAF…VQAADALSGA (94 aa)) enclose the HD domain.

The protein belongs to the RNase Y family.

It is found in the cell membrane. Its function is as follows. Endoribonuclease that initiates mRNA decay. The polypeptide is Ribonuclease Y (Desulfotalea psychrophila (strain LSv54 / DSM 12343)).